Consider the following 81-residue polypeptide: Acyl carrier protein (81 aa).

The region spanning 4–79 is the Carrier domain; sequence AEIKDKVYDI…QAIDYIVNKK (76 aa). Ser39 is subject to O-(pantetheine 4'-phosphoryl)serine.

Belongs to the acyl carrier protein (ACP) family. In terms of processing, 4'-phosphopantetheine is transferred from CoA to a specific serine of apo-ACP by AcpS. This modification is essential for activity because fatty acids are bound in thioester linkage to the sulfhydryl of the prosthetic group.

It is found in the cytoplasm. It participates in lipid metabolism; fatty acid biosynthesis. In terms of biological role, carrier of the growing fatty acid chain in fatty acid biosynthesis. This is Acyl carrier protein from Chlorobaculum tepidum (strain ATCC 49652 / DSM 12025 / NBRC 103806 / TLS) (Chlorobium tepidum).